The chain runs to 207 residues: N-(5'-phosphoribosyl)anthranilate isomerase (207 aa).

The protein belongs to the TrpF family.

It catalyses the reaction N-(5-phospho-beta-D-ribosyl)anthranilate = 1-(2-carboxyphenylamino)-1-deoxy-D-ribulose 5-phosphate. The protein operates within amino-acid biosynthesis; L-tryptophan biosynthesis; L-tryptophan from chorismate: step 3/5. The protein is N-(5'-phosphoribosyl)anthranilate isomerase of Petrotoga mobilis (strain DSM 10674 / SJ95).